A 530-amino-acid chain; its full sequence is Hyccin 2 (530 aa).

Residues threonine 30 and threonine 306 each carry the phosphothreonine modification. 2 positions are modified to phosphoserine: serine 321 and serine 341. Positions 328–410 (RREGAEGVNG…DSVVRKQYVQ (83 aa)) are disordered. Over residues 353-373 (SGASLSSQPIGTKPSSSSQRG) the composition is skewed to polar residues. Serine 430, serine 442, serine 444, and serine 491 each carry phosphoserine. A disordered region spans residues 502–530 (EGKELLSPGAPLTKQSRSPSFNMQLISQV). Residues 514 to 530 (TKQSRSPSFNMQLISQV) show a composition bias toward polar residues.

It belongs to the Hyccin family. Component of a phosphatidylinositol 4-kinase (PI4K) complex, composed of PI4KA, EFR3 (EFR3A or EFR3B), TTC7 (TTC7A or TTC7B) and HYCC (HYCC1 or HYCC2).

It localises to the cytoplasm. It is found in the cytosol. The protein resides in the cell membrane. Functionally, component of a complex required to localize phosphatidylinositol 4-kinase (PI4K) to the plasma membrane. The polypeptide is Hyccin 2 (Homo sapiens (Human)).